A 565-amino-acid polypeptide reads, in one-letter code: Periplasmic trehalase (565 aa).

The signal sequence occupies residues 1–30 (MKSPTPSRPQKMALIPACIFLCFAALSVQA). Substrate contacts are provided by residues R152, 159-160 (WD), N196, 205-207 (RSQ), 277-279 (RPE), and G310. Catalysis depends on proton donor/acceptor residues D312 and E496. E511 contributes to the substrate binding site. Positions 539–565 (CDNVPATRPLSESTTQPLKQKEAEPTP) are disordered.

It belongs to the glycosyl hydrolase 37 family. As to quaternary structure, monomer.

The protein resides in the periplasm. The enzyme catalyses alpha,alpha-trehalose + H2O = alpha-D-glucose + beta-D-glucose. Functionally, provides the cells with the ability to utilize trehalose at high osmolarity by splitting it into glucose molecules that can subsequently be taken up by the phosphotransferase-mediated uptake system. The polypeptide is Periplasmic trehalase (Escherichia coli (strain SMS-3-5 / SECEC)).